We begin with the raw amino-acid sequence, 513 residues long: ATP synthase subunit alpha 2 (513 aa).

ATP is bound at residue 169–176 (GDRQCGKT).

This sequence belongs to the ATPase alpha/beta chains family. F-type ATPases have 2 components, CF(1) - the catalytic core - and CF(0) - the membrane proton channel. CF(1) has five subunits: alpha(3), beta(3), gamma(1), delta(1), epsilon(1). CF(0) has three main subunits: a(1), b(2) and c(9-12). The alpha and beta chains form an alternating ring which encloses part of the gamma chain. CF(1) is attached to CF(0) by a central stalk formed by the gamma and epsilon chains, while a peripheral stalk is formed by the delta and b chains.

The protein resides in the cell inner membrane. It catalyses the reaction ATP + H2O + 4 H(+)(in) = ADP + phosphate + 5 H(+)(out). In terms of biological role, produces ATP from ADP in the presence of a proton gradient across the membrane. The alpha chain is a regulatory subunit. In Paraburkholderia xenovorans (strain LB400), this protein is ATP synthase subunit alpha 2.